The primary structure comprises 408 residues: MSAQNLAPPLNTLDFDKKPEETRVVVAMSGGVDSSVVAGLLKQQGYDVLGITLQLYDHGAAVHRAGSCCAGQDIDDARRVCETLGIPHYVLDYEKRFRETVINPFAESYVAGETPIPCVSCNQTVKFADLLATAKELGADALATGHYIRSRPNPSPEHPGRRALFRPADADRDQSYFLFATTQEQIDYLRFPLGGLPKAETRRLAEEMGLVVAKKADSQDICFVPQGKYSDIITKLKPNAALAGEIVHLDGRVLGTHEGILHFTIGQRRGIGIATGEPLYVVYLDARSRRVIVGPKEALETHRVYLRDVNWLGDETLGEAASGEGFACYAKVRSTRAPAPAVLHVDATGTYVDLTVGEAGIAPGQACALYSAPGDDARVFGGGFIERSEREPAAEASLKALLASPVAA.

Residues 27-34 (AMSGGVDS) and L53 each bind ATP. C121 acts as the Nucleophile in catalysis. Residues C121 and C222 are joined by a disulfide bond. Residue G145 coordinates ATP. The interaction with tRNA stretch occupies residues 172–174 (RDQ). Catalysis depends on C222, which acts as the Cysteine persulfide intermediate.

This sequence belongs to the MnmA/TRMU family.

Its subcellular location is the cytoplasm. The enzyme catalyses S-sulfanyl-L-cysteinyl-[protein] + uridine(34) in tRNA + AH2 + ATP = 2-thiouridine(34) in tRNA + L-cysteinyl-[protein] + A + AMP + diphosphate + H(+). Functionally, catalyzes the 2-thiolation of uridine at the wobble position (U34) of tRNA, leading to the formation of s(2)U34. This Rhizobium etli (strain CIAT 652) protein is tRNA-specific 2-thiouridylase MnmA.